Reading from the N-terminus, the 728-residue chain is MGRRKKIVEQCERLMDNPEQIRNIAIAAHVDHGKTTLTDNLLAGAGMISEDTAGQQLAMDTEEDEQERGITIDAANVSMTHEYEGDDHLINLIDTPGHVDFGGDVTRAMRAVDGALVVVDAVEGAMPQTETVVRQALREGVKPTLFINKVDRLISELQEGPEEMQERLLSVIGDVNELIRGMTEEKDDIEDWTVSVEDGTVAFGSALYKWGVSMPSMQRTGMDFGDIIDLERSDKREELHEQTPLADVVLDMVAEHFPNPIDAQPRRIPTVWRGDADSEIAESMRLVDEDGEVVLMVTDIGVDPHAGEIAAGRVFSGTLEKGQELYVSGTAGKNRVQSVGIYMGGEREEVDEVPAGNIAAVTGLKDAIAGSTVSNEEMTPFESIDHISEPVITKSIEAQNMDDLPKLIETLRQVSKEDPTISIEINEDTGEHLISGQGELHLEVQTQRIERNQGIPVTTGEPIVVYRETPTSDSQEVEGVSPNRHNKFYITVEQLSDDVLEEIRLGEVSMDMPEQERREVLQEAGMDKETSQDVENIIGRNIFIDDTKGIQHLNETMELVVDGLTDSLEDGPLAAEPVEGALIRLHDARLHEDAIHRGPAQVIPATRDAVHRALIDADIRLLEPIQDVRIDVPSEHMGAASGEVQGRRGRVDDMYQEGDLMVVEGIAPVDEMIGFSSDIRSATEGRASWNTENAGFRVMADNLQREIIMEIRERKGMKTELPESITHF.

Residues 19–261 form the tr-type G domain; sequence EQIRNIAIAA…MVAEHFPNPI (243 aa). Residues 28–35, 94–98, and 148–151 each bind GTP; these read AHVDHGKT, DTPGH, and NKVD. His-596 is subject to Diphthamide.

This sequence belongs to the TRAFAC class translation factor GTPase superfamily. Classic translation factor GTPase family. EF-G/EF-2 subfamily.

It is found in the cytoplasm. Its function is as follows. Catalyzes the GTP-dependent ribosomal translocation step during translation elongation. During this step, the ribosome changes from the pre-translocational (PRE) to the post-translocational (POST) state as the newly formed A-site-bound peptidyl-tRNA and P-site-bound deacylated tRNA move to the P and E sites, respectively. Catalyzes the coordinated movement of the two tRNA molecules, the mRNA and conformational changes in the ribosome. This Halobacterium salinarum (strain ATCC 29341 / DSM 671 / R1) protein is Elongation factor 2.